The sequence spans 471 residues: 3-isopropylmalate dehydratase large subunit (471 aa).

[4Fe-4S] cluster-binding residues include cysteine 349, cysteine 409, and cysteine 412.

It belongs to the aconitase/IPM isomerase family. LeuC type 1 subfamily. Heterodimer of LeuC and LeuD. [4Fe-4S] cluster serves as cofactor.

It catalyses the reaction (2R,3S)-3-isopropylmalate = (2S)-2-isopropylmalate. Its pathway is amino-acid biosynthesis; L-leucine biosynthesis; L-leucine from 3-methyl-2-oxobutanoate: step 2/4. Its function is as follows. Catalyzes the isomerization between 2-isopropylmalate and 3-isopropylmalate, via the formation of 2-isopropylmaleate. This is 3-isopropylmalate dehydratase large subunit from Aliivibrio fischeri (strain ATCC 700601 / ES114) (Vibrio fischeri).